Reading from the N-terminus, the 607-residue chain is Glycosyltransferase 25 family member (607 aa).

The signal sequence occupies residues 1–22 (MKPVSCVGLLVLLVGVLVTVKG). 4 N-linked (GlcNAc...) asparagine glycosylation sites follow: N226, N254, N514, and N565. Positions 566–607 (DTSDSSAEKKGDKEQLSSKTLMDSTISRDEHELSVANRKSEL) are disordered. 2 stretches are compositionally biased toward basic and acidic residues: residues 571 to 581 (SAEKKGDKEQL) and 591 to 607 (ISRD…KSEL). The short motif at 604-607 (KSEL) is the Prevents secretion from ER element.

It belongs to the glycosyltransferase 25 family.

The protein localises to the endoplasmic reticulum lumen. This Aedes aegypti (Yellowfever mosquito) protein is Glycosyltransferase 25 family member.